A 427-amino-acid chain; its full sequence is UPF0229 protein YeaH (427 aa).

The disordered stretch occupies residues 87 to 110 (RIERSQGGGGGSGSGQGQASQDGE). Positions 92–102 (QGGGGGSGSGQ) are enriched in gly residues.

The protein belongs to the UPF0229 family.

This is UPF0229 protein YeaH from Escherichia coli O6:K15:H31 (strain 536 / UPEC).